The chain runs to 185 residues: MKTAQELRVGNVVQIGSEAWVIAKAEYNKSGRNSAVVKMKMKNLLSNAGQESVYKADDKFEVVVLDRKEVTYSYFADPMYVFMDADYNQYEVEAEMMGEALNYLEDGMACEVVFYNEKAISVELPTVLVREITYTEPAVKGDTSSGKVLKNAKLATGFELQVPLFCNTGDKIEIDTRTNEYRSRA.

Belongs to the elongation factor P family.

It localises to the cytoplasm. Its pathway is protein biosynthesis; polypeptide chain elongation. Its function is as follows. Involved in peptide bond synthesis. Stimulates efficient translation and peptide-bond synthesis on native or reconstituted 70S ribosomes in vitro. Probably functions indirectly by altering the affinity of the ribosome for aminoacyl-tRNA, thus increasing their reactivity as acceptors for peptidyl transferase. The polypeptide is Elongation factor P (Burkholderia cenocepacia (strain HI2424)).